The primary structure comprises 93 residues: Ribonuclease P protein component 4 (93 aa).

Residues Cys-55, Cys-58, Cys-81, and Cys-83 each contribute to the Zn(2+) site.

It belongs to the eukaryotic/archaeal RNase P protein component 4 family. Consists of a catalytic RNA component and at least 4-5 protein subunits. The cofactor is Zn(2+).

Its subcellular location is the cytoplasm. It catalyses the reaction Endonucleolytic cleavage of RNA, removing 5'-extranucleotides from tRNA precursor.. Its function is as follows. Part of ribonuclease P, a protein complex that generates mature tRNA molecules by cleaving their 5'-ends. This Halobacterium salinarum (strain ATCC 29341 / DSM 671 / R1) protein is Ribonuclease P protein component 4.